The primary structure comprises 1446 residues: DNA polymerase III PolC-type (1446 aa).

The 157-residue stretch at 425–581 folds into the Exonuclease domain; sequence YVIFDVETTG…ADAESTGYLL (157 aa).

This sequence belongs to the DNA polymerase type-C family. PolC subfamily.

Its subcellular location is the cytoplasm. It catalyses the reaction DNA(n) + a 2'-deoxyribonucleoside 5'-triphosphate = DNA(n+1) + diphosphate. Its function is as follows. Required for replicative DNA synthesis. This DNA polymerase also exhibits 3' to 5' exonuclease activity. This Latilactobacillus sakei subsp. sakei (strain 23K) (Lactobacillus sakei subsp. sakei) protein is DNA polymerase III PolC-type.